A 343-amino-acid polypeptide reads, in one-letter code: NADH-quinone oxidoreductase subunit H (343 aa).

8 consecutive transmembrane segments (helical) span residues 5 to 25, 76 to 96, 119 to 139, 158 to 178, 190 to 210, 243 to 263, 284 to 304, and 323 to 343; these read FIIE…LMAM, FLFV…SAVI, ALLY…IGGW, VSYE…TGTL, MNWN…CAFA, LFAE…LFFG, ILGF…YMWV, and ILIP…LLFK.

Belongs to the complex I subunit 1 family. As to quaternary structure, NDH-1 is composed of 14 different subunits. Subunits NuoA, H, J, K, L, M, N constitute the membrane sector of the complex.

The protein localises to the cell inner membrane. The catalysed reaction is a quinone + NADH + 5 H(+)(in) = a quinol + NAD(+) + 4 H(+)(out). Functionally, NDH-1 shuttles electrons from NADH, via FMN and iron-sulfur (Fe-S) centers, to quinones in the respiratory chain. The immediate electron acceptor for the enzyme in this species is believed to be ubiquinone. Couples the redox reaction to proton translocation (for every two electrons transferred, four hydrogen ions are translocated across the cytoplasmic membrane), and thus conserves the redox energy in a proton gradient. This subunit may bind ubiquinone. In Flavobacterium psychrophilum (strain ATCC 49511 / DSM 21280 / CIP 103535 / JIP02/86), this protein is NADH-quinone oxidoreductase subunit H.